A 426-amino-acid chain; its full sequence is Serine--tRNA ligase (426 aa).

230-232 (TAE) lines the L-serine pocket. An ATP-binding site is contributed by 261 to 263 (RSE). Glu-284 lines the L-serine pocket. 348–351 (EISS) lines the ATP pocket. Ser-384 serves as a coordination point for L-serine.

This sequence belongs to the class-II aminoacyl-tRNA synthetase family. Type-1 seryl-tRNA synthetase subfamily. In terms of assembly, homodimer. The tRNA molecule binds across the dimer.

It localises to the cytoplasm. It carries out the reaction tRNA(Ser) + L-serine + ATP = L-seryl-tRNA(Ser) + AMP + diphosphate + H(+). The enzyme catalyses tRNA(Sec) + L-serine + ATP = L-seryl-tRNA(Sec) + AMP + diphosphate + H(+). The protein operates within aminoacyl-tRNA biosynthesis; selenocysteinyl-tRNA(Sec) biosynthesis; L-seryl-tRNA(Sec) from L-serine and tRNA(Sec): step 1/1. Its function is as follows. Catalyzes the attachment of serine to tRNA(Ser). Is also able to aminoacylate tRNA(Sec) with serine, to form the misacylated tRNA L-seryl-tRNA(Sec), which will be further converted into selenocysteinyl-tRNA(Sec). The protein is Serine--tRNA ligase of Novosphingobium aromaticivorans (strain ATCC 700278 / DSM 12444 / CCUG 56034 / CIP 105152 / NBRC 16084 / F199).